Reading from the N-terminus, the 543-residue chain is Protein GPR108 (543 aa).

An N-terminal signal peptide occupies residues 1 to 32 (MAVSERRGLGRGSPAEWGQRLLLVLLLGGCSG). N-linked (GlcNAc...) asparagine glycosylation is found at Asn-57 and Asn-109. The segment at 149 to 186 (SKPGLPKPQATVPRKVDGGGTSAASKPKSTPAVIQGPS) is disordered. 3 N-linked (GlcNAc...) asparagine glycosylation sites follow: Asn-200, Asn-204, and Asn-228. A run of 7 helical transmembrane segments spans residues 263–283 (LYMVMSACFLAAGIFWVSILC), 292–312 (IHWLMAALAFTKSISLLFHSI), 336–356 (LLKGALLFITIALIGSGWAFI), 367–387 (VFGIVIPMQVLANVAYIIIES), 401–421 (ILFLVDLICCGAILFPVVWSI), 449–469 (VMVICYVYFTRIIAILLQVAV), and 473–493 (WQWLYQLLVEGSTLAFFVLTG). Residue Asn-534 is glycosylated (N-linked (GlcNAc...) asparagine).

The protein belongs to the LU7TM family.

It localises to the golgi apparatus. It is found in the cis-Golgi network membrane. The protein resides in the trans-Golgi network membrane. Its subcellular location is the golgi apparatus membrane. In terms of biological role, may play a role in intracellular immune modulation by activating NF-kappaB response and attenuating Toll-like-receptor response. Functionally, (Microbial infection) Plays an essential function in adeno-associated virus (AAV) transduction across multiple serotypes except AAV5. May play a critical role in mediating the endosomal virus escape or in the AAV virions trafficking from endosomes to the nucleus. In Homo sapiens (Human), this protein is Protein GPR108.